The primary structure comprises 464 residues: UDP-N-acetylmuramoyl-tripeptide--D-alanyl-D-alanine ligase (464 aa).

125 to 131 contributes to the ATP binding site; that stretch reads GSNGKTT.

It belongs to the MurCDEF family. MurF subfamily.

It localises to the cytoplasm. The enzyme catalyses D-alanyl-D-alanine + UDP-N-acetyl-alpha-D-muramoyl-L-alanyl-gamma-D-glutamyl-meso-2,6-diaminopimelate + ATP = UDP-N-acetyl-alpha-D-muramoyl-L-alanyl-gamma-D-glutamyl-meso-2,6-diaminopimeloyl-D-alanyl-D-alanine + ADP + phosphate + H(+). Its pathway is cell wall biogenesis; peptidoglycan biosynthesis. In terms of biological role, involved in cell wall formation. Catalyzes the final step in the synthesis of UDP-N-acetylmuramoyl-pentapeptide, the precursor of murein. This is UDP-N-acetylmuramoyl-tripeptide--D-alanyl-D-alanine ligase from Borreliella burgdorferi (strain ATCC 35210 / DSM 4680 / CIP 102532 / B31) (Borrelia burgdorferi).